The following is a 130-amino-acid chain: Small ribosomal subunit protein uS8 (130 aa).

Belongs to the universal ribosomal protein uS8 family. In terms of assembly, part of the 30S ribosomal subunit. Contacts proteins S5 and S12.

Its function is as follows. One of the primary rRNA binding proteins, it binds directly to 16S rRNA central domain where it helps coordinate assembly of the platform of the 30S subunit. This chain is Small ribosomal subunit protein uS8, found in Pseudoalteromonas translucida (strain TAC 125).